Reading from the N-terminus, the 97-residue chain is Cobalt transport protein CbiN (97 aa).

Transmembrane regions (helical) follow at residues 6–26 (VLMI…YSGL) and 68–88 (SLLF…FFGY).

Belongs to the CbiN family. Forms an energy-coupling factor (ECF) transporter complex composed of an ATP-binding protein (A component, CbiO), a transmembrane protein (T component, CbiQ) and 2 possible substrate-capture proteins (S components, CbiM and CbiN) of unknown stoichimetry.

It is found in the cell membrane. It functions in the pathway cofactor biosynthesis; adenosylcobalamin biosynthesis. Its function is as follows. Part of the energy-coupling factor (ECF) transporter complex CbiMNOQ involved in cobalt import. This chain is Cobalt transport protein CbiN, found in Methanococcus maripaludis (strain C5 / ATCC BAA-1333).